The sequence spans 242 residues: Biosynthetic peptidoglycan transglycosylase (242 aa).

The chain crosses the membrane as a helical span at residues 19-39; it reads LMVVLAVFWGGGIALFSVAPV.

Belongs to the glycosyltransferase 51 family.

It localises to the cell inner membrane. It catalyses the reaction [GlcNAc-(1-&gt;4)-Mur2Ac(oyl-L-Ala-gamma-D-Glu-L-Lys-D-Ala-D-Ala)](n)-di-trans,octa-cis-undecaprenyl diphosphate + beta-D-GlcNAc-(1-&gt;4)-Mur2Ac(oyl-L-Ala-gamma-D-Glu-L-Lys-D-Ala-D-Ala)-di-trans,octa-cis-undecaprenyl diphosphate = [GlcNAc-(1-&gt;4)-Mur2Ac(oyl-L-Ala-gamma-D-Glu-L-Lys-D-Ala-D-Ala)](n+1)-di-trans,octa-cis-undecaprenyl diphosphate + di-trans,octa-cis-undecaprenyl diphosphate + H(+). The protein operates within cell wall biogenesis; peptidoglycan biosynthesis. Functionally, peptidoglycan polymerase that catalyzes glycan chain elongation from lipid-linked precursors. The polypeptide is Biosynthetic peptidoglycan transglycosylase (Escherichia coli (strain SMS-3-5 / SECEC)).